The sequence spans 449 residues: Bifunctional protein GlmU (449 aa).

Residues 1–230 (MASSKLAVIV…EAELLGVNAR (230 aa)) form a pyrophosphorylase region. Residues 11–14 (LAAG), K25, Q74, 79–80 (GT), 102–104 (YGD), G142, E156, N171, and N228 each bind UDP-N-acetyl-alpha-D-glucosamine. D104 contributes to the Mg(2+) binding site. N228 is a Mg(2+) binding site. The segment at 231–251 (SELAVAEALVQARLREAAMDN) is linker. The tract at residues 252–449 (GATLIDPATV…QQAAKKAKKD (198 aa)) is N-acetyltransferase. UDP-N-acetyl-alpha-D-glucosamine contacts are provided by R317 and K335. H347 serves as the catalytic Proton acceptor. The UDP-N-acetyl-alpha-D-glucosamine site is built by Y350 and N361. Acetyl-CoA-binding positions include A364, 370–371 (NY), S389, A407, and R424.

This sequence in the N-terminal section; belongs to the N-acetylglucosamine-1-phosphate uridyltransferase family. The protein in the C-terminal section; belongs to the transferase hexapeptide repeat family. In terms of assembly, homotrimer. The cofactor is Mg(2+).

It is found in the cytoplasm. The enzyme catalyses alpha-D-glucosamine 1-phosphate + acetyl-CoA = N-acetyl-alpha-D-glucosamine 1-phosphate + CoA + H(+). It carries out the reaction N-acetyl-alpha-D-glucosamine 1-phosphate + UTP + H(+) = UDP-N-acetyl-alpha-D-glucosamine + diphosphate. It participates in nucleotide-sugar biosynthesis; UDP-N-acetyl-alpha-D-glucosamine biosynthesis; N-acetyl-alpha-D-glucosamine 1-phosphate from alpha-D-glucosamine 6-phosphate (route II): step 2/2. Its pathway is nucleotide-sugar biosynthesis; UDP-N-acetyl-alpha-D-glucosamine biosynthesis; UDP-N-acetyl-alpha-D-glucosamine from N-acetyl-alpha-D-glucosamine 1-phosphate: step 1/1. The protein operates within bacterial outer membrane biogenesis; LPS lipid A biosynthesis. In terms of biological role, catalyzes the last two sequential reactions in the de novo biosynthetic pathway for UDP-N-acetylglucosamine (UDP-GlcNAc). The C-terminal domain catalyzes the transfer of acetyl group from acetyl coenzyme A to glucosamine-1-phosphate (GlcN-1-P) to produce N-acetylglucosamine-1-phosphate (GlcNAc-1-P), which is converted into UDP-GlcNAc by the transfer of uridine 5-monophosphate (from uridine 5-triphosphate), a reaction catalyzed by the N-terminal domain. In Paramagnetospirillum magneticum (strain ATCC 700264 / AMB-1) (Magnetospirillum magneticum), this protein is Bifunctional protein GlmU.